We begin with the raw amino-acid sequence, 255 residues long: EEF1A lysine methyltransferase 4 (255 aa).

S-adenosyl-L-methionine-binding residues include Trp-26 and Tyr-30. Tyr-39 carries the phosphotyrosine modification. S-adenosyl-L-methionine is bound by residues Trp-41, Gly-66, 88-89 (DY), 113-114 (DV), and Lys-130. Residues 129–134 (EKGTLD) carry the Required for methyltransferase activity motif.

It belongs to the methyltransferase superfamily.

The catalysed reaction is L-lysyl-[protein] + S-adenosyl-L-methionine = N(6)-methyl-L-lysyl-[protein] + S-adenosyl-L-homocysteine + H(+). The enzyme catalyses N(6)-methyl-L-lysyl-[protein] + S-adenosyl-L-methionine = N(6),N(6)-dimethyl-L-lysyl-[protein] + S-adenosyl-L-homocysteine + H(+). It catalyses the reaction N(6),N(6)-dimethyl-L-lysyl-[protein] + S-adenosyl-L-methionine = N(6),N(6),N(6)-trimethyl-L-lysyl-[protein] + S-adenosyl-L-homocysteine + H(+). Its function is as follows. Protein-lysine methyltransferase that efficiently catalyzes three successive methylations on 'Lys-36' in eukaryotic translation elongation factor 1 alpha (EEF1A1 or EEF1A2). The protein is EEF1A lysine methyltransferase 4 of Homo sapiens (Human).